We begin with the raw amino-acid sequence, 151 residues long: MHALQAKILDPRIGTEFPLPQYATPGSAGLDLRAMLQEDIVIKPGETVLIPTGLSVYIGDPNLAALILPRSGMGHKHGIVLGNLVGLIDSDYQGPLMVSCWNRGQTEFTMPVGERLAQLVLVPVVQAHFEMVEEFVETERGTGGFGHSGTK.

Substrate contacts are provided by residues 70 to 72 (RSG), asparagine 83, 87 to 89 (LID), and methionine 97.

Belongs to the dUTPase family. Mg(2+) serves as cofactor.

The catalysed reaction is dUTP + H2O = dUMP + diphosphate + H(+). The protein operates within pyrimidine metabolism; dUMP biosynthesis; dUMP from dCTP (dUTP route): step 2/2. Its function is as follows. This enzyme is involved in nucleotide metabolism: it produces dUMP, the immediate precursor of thymidine nucleotides and it decreases the intracellular concentration of dUTP so that uracil cannot be incorporated into DNA. The chain is Deoxyuridine 5'-triphosphate nucleotidohydrolase from Pseudomonas fluorescens (strain Pf0-1).